Reading from the N-terminus, the 317-residue chain is Transaldolase (317 aa).

Lysine 132 serves as the catalytic Schiff-base intermediate with substrate.

The protein belongs to the transaldolase family. Type 1 subfamily. As to quaternary structure, homodimer.

It is found in the cytoplasm. The enzyme catalyses D-sedoheptulose 7-phosphate + D-glyceraldehyde 3-phosphate = D-erythrose 4-phosphate + beta-D-fructose 6-phosphate. The protein operates within carbohydrate degradation; pentose phosphate pathway; D-glyceraldehyde 3-phosphate and beta-D-fructose 6-phosphate from D-ribose 5-phosphate and D-xylulose 5-phosphate (non-oxidative stage): step 2/3. In terms of biological role, transaldolase is important for the balance of metabolites in the pentose-phosphate pathway. The polypeptide is Transaldolase (Haemophilus influenzae (strain PittGG)).